The following is a 118-amino-acid chain: Vesicle-associated membrane protein 1 (118 aa).

Over residues 1-15 the composition is skewed to low complexity; sequence MSAPAQPPTEGAEGA. The segment at 1–36 is disordered; that stretch reads MSAPAQPPTEGAEGAAPGGGPPGPPPNMTSNRRLQQ. The Cytoplasmic portion of the chain corresponds to 1-96; that stretch reads MSAPAQPPTE…KRKYWWKNCK (96 aa). Positions 33–93 constitute a v-SNARE coiled-coil homology domain; it reads RLQQTQAQVE…AKLKRKYWWK (61 aa). S63 is subject to Phosphoserine. A helical; Anchor for type IV membrane protein membrane pass occupies residues 97–116; it reads MMIMLGAICAIIVVVIVIYF. Topologically, residues 117–118 are vesicular; sequence FA.

The protein belongs to the synaptobrevin family. In terms of assembly, interacts with VAPA and VAPB.

Its subcellular location is the cytoplasmic vesicle. The protein localises to the secretory vesicle. It is found in the synaptic vesicle membrane. It localises to the synapse. The protein resides in the synaptosome. Its subcellular location is the cytoplasmic vesicle membrane. Involved in the targeting and/or fusion of transport vesicles to their target membrane. This is Vesicle-associated membrane protein 1 (VAMP1) from Bos taurus (Bovine).